The primary structure comprises 132 residues: Ribosome-binding factor A (132 aa).

It belongs to the RbfA family. Monomer. Binds 30S ribosomal subunits, but not 50S ribosomal subunits or 70S ribosomes.

The protein resides in the cytoplasm. Its function is as follows. One of several proteins that assist in the late maturation steps of the functional core of the 30S ribosomal subunit. Associates with free 30S ribosomal subunits (but not with 30S subunits that are part of 70S ribosomes or polysomes). Required for efficient processing of 16S rRNA. May interact with the 5'-terminal helix region of 16S rRNA. This chain is Ribosome-binding factor A, found in Bordetella avium (strain 197N).